Consider the following 828-residue polypeptide: Periplasmic nitrate reductase (828 aa).

Residues 1 to 31 (MKLSRRSFMKANAVAAAAAAAGLSVPGVARA) constitute a signal peptide (tat-type signal). The 4Fe-4S Mo/W bis-MGD-type domain maps to 39–95 (IKWDKAPCRFCGTGCGVLVGTQQGRVVACQGDPDAPVNRGLNCIKGYFLPKIMYGKD). Residues cysteine 46, cysteine 49, cysteine 53, and cysteine 81 each contribute to the [4Fe-4S] cluster site. Residues lysine 83, glutamine 150, asparagine 175, cysteine 179, 212 to 219 (WGSNMAEM), 243 to 247 (STYQH), 262 to 264 (QSD), methionine 372, glutamine 376, asparagine 482, 508 to 509 (SD), lysine 531, aspartate 558, and 718 to 727 (TGRVLEHWHT) contribute to the Mo-bis(molybdopterin guanine dinucleotide) site. Phenylalanine 794 contacts substrate. Asparagine 802 and lysine 819 together coordinate Mo-bis(molybdopterin guanine dinucleotide).

The protein belongs to the prokaryotic molybdopterin-containing oxidoreductase family. NasA/NapA/NarB subfamily. In terms of assembly, component of the periplasmic nitrate reductase NapAB complex composed of NapA and NapB. The cofactor is [4Fe-4S] cluster. Mo-bis(molybdopterin guanine dinucleotide) is required as a cofactor. Predicted to be exported by the Tat system. The position of the signal peptide cleavage has not been experimentally proven.

It is found in the periplasm. It carries out the reaction 2 Fe(II)-[cytochrome] + nitrate + 2 H(+) = 2 Fe(III)-[cytochrome] + nitrite + H2O. Its function is as follows. Catalytic subunit of the periplasmic nitrate reductase complex NapAB. Receives electrons from NapB and catalyzes the reduction of nitrate to nitrite. This Escherichia coli O127:H6 (strain E2348/69 / EPEC) protein is Periplasmic nitrate reductase.